Consider the following 340-residue polypeptide: Zinc finger protein 488 (340 aa).

The tract at residues 72–187 (AELALLVAPG…SVFPAGESAD (116 aa)) is important for transcriptional repression activity. The interval 77–180 (LVAPGKPRPG…AERPELTSVF (104 aa)) is disordered. Pro residues predominate over residues 82–91 (KPRPGKPLPP). The segment covering 106 to 125 (PRMKDRQVDAQAQEREHDDP) has biased composition (basic and acidic residues). 2 C2H2-type zinc fingers span residues 275–302 (NWCA…KKEH) and 317–339 (LACP…MTSH). Residues 298 to 305 (HKKEHAGP) carry the Nuclear localization signal motif.

This sequence belongs to the krueppel C2H2-type zinc-finger protein family. Interacts with OLIG2.

It localises to the nucleus. In terms of biological role, transcriptional repressor. Plays a role in oligodendrocyte differentiation, together with OLIG2. Mediates Notch signaling-activated formation of oligodendrocyte precursors. Promotes differentiation of adult neural stem progenitor cells (NSPCs) into mature oligodendrocytes and contributes to remyelination following nerve injury. This Homo sapiens (Human) protein is Zinc finger protein 488 (ZNF488).